Reading from the N-terminus, the 200-residue chain is 3-isopropylmalate dehydratase small subunit (200 aa).

This sequence belongs to the LeuD family. LeuD type 1 subfamily. As to quaternary structure, heterodimer of LeuC and LeuD.

It carries out the reaction (2R,3S)-3-isopropylmalate = (2S)-2-isopropylmalate. It participates in amino-acid biosynthesis; L-leucine biosynthesis; L-leucine from 3-methyl-2-oxobutanoate: step 2/4. Its function is as follows. Catalyzes the isomerization between 2-isopropylmalate and 3-isopropylmalate, via the formation of 2-isopropylmaleate. The polypeptide is 3-isopropylmalate dehydratase small subunit (Yersinia pseudotuberculosis serotype I (strain IP32953)).